Reading from the N-terminus, the 625-residue chain is Protein LEO1 homolog (625 aa).

Disordered regions lie at residues 1–214 (MVKG…DMVL) and 415–625 (EREK…SDED). Acidic residues-rich tracts occupy residues 40–55 (DEAEGGVEPEGEGEAE) and 63–80 (EAESDGEQGDVELDPGES). Basic and acidic residues-rich tracts occupy residues 97–113 (SEARDSDSDNKEEEHGG), 121–137 (QEVVESGSERSGEKHYE), and 182–197 (EYVRNDVEQDEHRSPI). Phosphoserine is present on S203. Over residues 415–425 (EREKEKREKAE) the composition is skewed to basic and acidic residues. A coiled-coil region spans residues 415–539 (EREKEKREKA…ETEEEEEEKS (125 aa)). The span at 426–436 (SQNLKASTKLS) shows a compositional bias: polar residues. Positions 471 to 491 (YRSNRGYEEDLEAEAQRERRI) are enriched in basic and acidic residues. Residues 492–501 (LNAKKSHKGI) are compositionally biased toward basic residues. Acidic residues predominate over residues 523–537 (EREESEYETEEEEEE). The segment covering 538–547 (KSPARGRGKD) has biased composition (basic and acidic residues). 5 positions are modified to phosphoserine: S548, S570, S600, S605, and S622. Residues 548 to 561 (SEDEYEEDAEEDEE) show a composition bias toward acidic residues.

It belongs to the LEO1 family. As to quaternary structure, component of the nuclear PAF1 complex (PAF1C), which consists of VIP2/ELF7/PAF1, VIP3/SKI8/WDR61, VIP4/LEO1, VIP5/RTF1, VIP6/ELF8/CTR9 and CDC73. Interacts with VIP3 and VIP6. In terms of tissue distribution, expressed in roots, shoot apices, stems, cauline leaves, inflorescence apices and flowers.

The protein resides in the nucleus. Functionally, component of the PAF1 complex (PAF1C) which is involved in histone modifications such as methylation on histone H3 'Lys-4' (H3K4me3). Involved in regulation of flowering time. Required for the expression of the flowering repressor and MADS box gene FLC. Involved in the control of seed dormancy and germination. This Arabidopsis thaliana (Mouse-ear cress) protein is Protein LEO1 homolog.